The primary structure comprises 440 residues: Xylose isomerase (440 aa).

Catalysis depends on residues H100 and D103. Mg(2+) is bound by residues E231, E267, H270, D295, D306, D308, and D338.

Belongs to the xylose isomerase family. Homotetramer. It depends on Mg(2+) as a cofactor.

The protein localises to the cytoplasm. The catalysed reaction is alpha-D-xylose = alpha-D-xylulofuranose. The sequence is that of Xylose isomerase from Paraburkholderia phytofirmans (strain DSM 17436 / LMG 22146 / PsJN) (Burkholderia phytofirmans).